A 447-amino-acid polypeptide reads, in one-letter code: Kynurenine 3-monooxygenase (447 aa).

The protein belongs to the aromatic-ring hydroxylase family. KMO subfamily. Requires FAD as cofactor.

The catalysed reaction is L-kynurenine + NADPH + O2 + H(+) = 3-hydroxy-L-kynurenine + NADP(+) + H2O. It participates in cofactor biosynthesis; NAD(+) biosynthesis; quinolinate from L-kynurenine: step 1/3. Its function is as follows. Catalyzes the hydroxylation of L-kynurenine (L-Kyn) to form 3-hydroxy-L-kynurenine (L-3OHKyn). Required for synthesis of quinolinic acid. The chain is Kynurenine 3-monooxygenase from Christiangramia forsetii (strain DSM 17595 / CGMCC 1.15422 / KT0803) (Gramella forsetii).